Reading from the N-terminus, the 159-residue chain is Large ribosomal subunit protein uL15 (159 aa).

Positions 21 to 34 (LRPAPGAHKSKIRV) are enriched in basic residues. Residues 21-55 (LRPAPGAHKSKIRVGRGEGSKGKTAGRGTKGSKAR) are disordered.

Belongs to the universal ribosomal protein uL15 family. As to quaternary structure, part of the 50S ribosomal subunit.

In terms of biological role, binds to the 23S rRNA. The chain is Large ribosomal subunit protein uL15 from Frankia casuarinae (strain DSM 45818 / CECT 9043 / HFP020203 / CcI3).